A 205-amino-acid polypeptide reads, in one-letter code: MTKRSEAKYKIDRRMGQNIWGRPKSPVNRREYGPGQHGQRRKGKLSDFGVQLRAKQKLKGYYANISERQFHSIYVEATRLKGDSGENLIGLLERRLDTVVYRAKFVSTMFAARQFINHGHIKVNGKRVNISSYKVRVGDLIEVKESSKQLAFVLEASQLAERDVPDYIEVDHNKMTAKFGRIPALTDVPFAVQMEPHLIVEFYSR.

Residues 18 to 46 form a disordered region; that stretch reads NIWGRPKSPVNRREYGPGQHGQRRKGKLS. In terms of domain architecture, S4 RNA-binding spans 94–157; it reads RRLDTVVYRA…KQLAFVLEAS (64 aa).

The protein belongs to the universal ribosomal protein uS4 family. As to quaternary structure, part of the 30S ribosomal subunit. Contacts protein S5. The interaction surface between S4 and S5 is involved in control of translational fidelity.

One of the primary rRNA binding proteins, it binds directly to 16S rRNA where it nucleates assembly of the body of the 30S subunit. In terms of biological role, with S5 and S12 plays an important role in translational accuracy. The polypeptide is Small ribosomal subunit protein uS4 (Rhodopseudomonas palustris (strain HaA2)).